Reading from the N-terminus, the 345-residue chain is Transcription factor STKL1 (345 aa).

Positions methionine 1 to serine 145 are disordered. A compositionally biased stretch (low complexity) spans serine 11–isoleucine 22. A compositionally biased stretch (basic and acidic residues) spans serine 23 to glutamate 32. The segment covering valine 37–proline 46 has biased composition (polar residues). Serine 105 is subject to Phosphoserine. A compositionally biased stretch (basic and acidic residues) spans arginine 114–lysine 137.

The protein belongs to the GeBP family. In terms of tissue distribution, expressed strongly in leaves and flowers, weakly in roots, and very weakly in stems.

It is found in the nucleus. Transcription repressor that binds DNA in a sequence-specific manner, 5'-GCCT-3', to regulate the expression of PGR. Acts as a modulatory component for the glucose-triggered developmental leaf growth process. This chain is Transcription factor STKL1, found in Arabidopsis thaliana (Mouse-ear cress).